The primary structure comprises 106 residues: L-rhamnose mutarotase (106 aa).

Tyr20 contributes to the substrate binding site. Residue His24 is the Proton donor of the active site. Residues Tyr43 and 78–79 (WW) contribute to the substrate site.

Belongs to the rhamnose mutarotase family. Homodimer.

It localises to the cytoplasm. It catalyses the reaction alpha-L-rhamnose = beta-L-rhamnose. Its pathway is carbohydrate metabolism; L-rhamnose metabolism. In terms of biological role, involved in the anomeric conversion of L-rhamnose. The polypeptide is L-rhamnose mutarotase (Rhizobium etli (strain ATCC 51251 / DSM 11541 / JCM 21823 / NBRC 15573 / CFN 42)).